A 42-amino-acid chain; its full sequence is MTNTGTTGRIPLWLVGTVVGTLALGLVALFFYGAYHGLGSSL.

The helical transmembrane segment at Ile10 to Phe30 threads the bilayer.

It belongs to the PsbJ family. PSII is composed of 1 copy each of membrane proteins PsbA, PsbB, PsbC, PsbD, PsbE, PsbF, PsbH, PsbI, PsbJ, PsbK, PsbL, PsbM, PsbT, PsbX, PsbY, PsbZ, Psb30/Ycf12, at least 3 peripheral proteins of the oxygen-evolving complex and a large number of cofactors. It forms dimeric complexes.

Its subcellular location is the plastid. It is found in the chloroplast thylakoid membrane. Its function is as follows. One of the components of the core complex of photosystem II (PSII). PSII is a light-driven water:plastoquinone oxidoreductase that uses light energy to abstract electrons from H(2)O, generating O(2) and a proton gradient subsequently used for ATP formation. It consists of a core antenna complex that captures photons, and an electron transfer chain that converts photonic excitation into a charge separation. The protein is Photosystem II reaction center protein J of Oltmannsiellopsis viridis (Marine flagellate).